A 396-amino-acid chain; its full sequence is Acetate kinase (396 aa).

N7 contacts Mg(2+). Residue K14 participates in ATP binding. R86 provides a ligand contact to substrate. D143 serves as the catalytic Proton donor/acceptor. ATP is bound by residues 203–207 (HLGNG), 277–279 (DMR), and 325–329 (GIGEH). Residue E380 coordinates Mg(2+).

Belongs to the acetokinase family. Homodimer. Requires Mg(2+) as cofactor. Mn(2+) serves as cofactor.

The protein localises to the cytoplasm. It carries out the reaction acetate + ATP = acetyl phosphate + ADP. It functions in the pathway metabolic intermediate biosynthesis; acetyl-CoA biosynthesis; acetyl-CoA from acetate: step 1/2. Functionally, catalyzes the formation of acetyl phosphate from acetate and ATP. Can also catalyze the reverse reaction. The protein is Acetate kinase of Sulfurovum sp. (strain NBC37-1).